Here is a 379-residue protein sequence, read N- to C-terminus: Histidinol-phosphate aminotransferase (379 aa).

Position 231 is an N6-(pyridoxal phosphate)lysine (lysine 231).

Belongs to the class-II pyridoxal-phosphate-dependent aminotransferase family. Histidinol-phosphate aminotransferase subfamily. As to quaternary structure, homodimer. The cofactor is pyridoxal 5'-phosphate.

It catalyses the reaction L-histidinol phosphate + 2-oxoglutarate = 3-(imidazol-4-yl)-2-oxopropyl phosphate + L-glutamate. The protein operates within amino-acid biosynthesis; L-histidine biosynthesis; L-histidine from 5-phospho-alpha-D-ribose 1-diphosphate: step 7/9. This Mycolicibacterium smegmatis (strain ATCC 700084 / mc(2)155) (Mycobacterium smegmatis) protein is Histidinol-phosphate aminotransferase.